The sequence spans 346 residues: Beta-ketoacyl-[acyl-carrier-protein] synthase III (346 aa).

Residues Cys-120 and His-256 contribute to the active site. The interval 257–261 (QANIR) is ACP-binding. Asn-286 is a catalytic residue.

This sequence belongs to the thiolase-like superfamily. FabH family. As to quaternary structure, homodimer.

Its subcellular location is the cytoplasm. It catalyses the reaction malonyl-[ACP] + acetyl-CoA + H(+) = 3-oxobutanoyl-[ACP] + CO2 + CoA. Its pathway is lipid metabolism; fatty acid biosynthesis. Its function is as follows. Catalyzes the condensation reaction of fatty acid synthesis by the addition to an acyl acceptor of two carbons from malonyl-ACP. Catalyzes the first condensation reaction which initiates fatty acid synthesis and may therefore play a role in governing the total rate of fatty acid production. Possesses both acetoacetyl-ACP synthase and acetyl transacylase activities. Its substrate specificity determines the biosynthesis of branched-chain and/or straight-chain of fatty acids. The chain is Beta-ketoacyl-[acyl-carrier-protein] synthase III from Deinococcus geothermalis (strain DSM 11300 / CIP 105573 / AG-3a).